The sequence spans 128 residues: 3-aminoacrylate deaminase RutC (128 aa).

Belongs to the RutC family.

It carries out the reaction (Z)-3-aminoacrylate + H2O + H(+) = 3-oxopropanoate + NH4(+). Functionally, involved in pyrimidine catabolism. Catalyzes the deamination of 3-aminoacrylate to malonic semialdehyde, a reaction that can also occur spontaneously. RutC may facilitate the reaction and modulate the metabolic fitness, rather than catalyzing essential functions. This Enterobacter sp. (strain 638) protein is 3-aminoacrylate deaminase RutC.